A 143-amino-acid chain; its full sequence is Large ribosomal subunit protein uL13 (143 aa).

It belongs to the universal ribosomal protein uL13 family. As to quaternary structure, part of the 50S ribosomal subunit.

Functionally, this protein is one of the early assembly proteins of the 50S ribosomal subunit, although it is not seen to bind rRNA by itself. It is important during the early stages of 50S assembly. The protein is Large ribosomal subunit protein uL13 of Clostridioides difficile (strain 630) (Peptoclostridium difficile).